Here is a 200-residue protein sequence, read N- to C-terminus: uncharacterized protein (200 aa).

The interval 1–21 (MSNSAQRDARNSRDESARASD) is disordered. Residues 7–21 (RDARNSRDESARASD) are compositionally biased toward basic and acidic residues.

This is an uncharacterized protein from Mycobacterium tuberculosis (strain CDC 1551 / Oshkosh).